We begin with the raw amino-acid sequence, 438 residues long: 23S rRNA (uracil(1939)-C(5))-methyltransferase RlmD (438 aa).

Positions 11-69 (LQPESKHQQVLVEKLDHQGAGIAYLNKKPLFIDGTLPGEEVVTQLTESKSKFARGKLIK) constitute a TRAM domain. Positions 82, 88, 91, and 169 each coordinate [4Fe-4S] cluster. 6 residues coordinate S-adenosyl-L-methionine: Gln272, Phe301, Asn306, Glu322, Asn349, and Asp370. Cys396 serves as the catalytic Nucleophile.

This sequence belongs to the class I-like SAM-binding methyltransferase superfamily. RNA M5U methyltransferase family. RlmD subfamily.

The catalysed reaction is uridine(1939) in 23S rRNA + S-adenosyl-L-methionine = 5-methyluridine(1939) in 23S rRNA + S-adenosyl-L-homocysteine + H(+). In terms of biological role, catalyzes the formation of 5-methyl-uridine at position 1939 (m5U1939) in 23S rRNA. This Vibrio vulnificus (strain YJ016) protein is 23S rRNA (uracil(1939)-C(5))-methyltransferase RlmD.